Consider the following 343-residue polypeptide: NADH-quinone oxidoreductase subunit H (343 aa).

Transmembrane regions (helical) follow at residues 19-39, 89-109, 124-144, 158-178, 198-218, 257-277, 279-299, and 314-334; these read VAWT…GVAY, ALFI…WAVI, LLYV…AGWA, AAQI…VLMA, WYLW…VAET, ILVA…PVAF, PDGI…FLWF, and LGWK…GGMM.

Belongs to the complex I subunit 1 family. NDH-1 is composed of 14 different subunits. Subunits NuoA, H, J, K, L, M, N constitute the membrane sector of the complex.

It localises to the cell inner membrane. It catalyses the reaction a quinone + NADH + 5 H(+)(in) = a quinol + NAD(+) + 4 H(+)(out). In terms of biological role, NDH-1 shuttles electrons from NADH, via FMN and iron-sulfur (Fe-S) centers, to quinones in the respiratory chain. The immediate electron acceptor for the enzyme in this species is believed to be ubiquinone. Couples the redox reaction to proton translocation (for every two electrons transferred, four hydrogen ions are translocated across the cytoplasmic membrane), and thus conserves the redox energy in a proton gradient. This subunit may bind ubiquinone. The polypeptide is NADH-quinone oxidoreductase subunit H (Thiobacillus denitrificans (strain ATCC 25259 / T1)).